Consider the following 498-residue polypeptide: MHPDLTERILQHLETTDKADTLDLAALFAEDHQKIVGSLKSIQAHGELVTAETVTHKSLGLTDEGRAVVENGSHEALVYDLVPPEGIAQAALMAAGGANAKVGFSKAMSHGWILVDKSVTPPLVRRKVDTITDVVRNQLQQVALGKGDQLPAKEVADFKKRKLLQETTTKSFVLARGPEFATTLTKLETDLTVEMLANGLWDQLKFKAYNFDALGAPPTRGHLHPLLKVRTEFRQIFLEMGFSEMPTNNYVESSFWNFDALYQPQQHPARDAHDTFFVNHPAKSHKFPQDYLERVKKVHSVGGYGSKGYGYDWKLEEAQKNLLRTHTTAVSARMLYKLANQEGGFKAAKYFSIDKVFRNETLDATHLAEFHQVEGVIADVGLTLGDLIGTLYEFFRKLGITQLEFKPAYNPYTEPSMEIFCYHPGLAKWIEVGNSGVFRPEMLLPMGLPENVNVIAWGLSLERPTMIKYGINNIRDLVGPKVDLKMVEEGPICRLDHA.

L-phenylalanine contacts are provided by residues Thr-328, 372–374, and Tyr-412; that span reads QVE. Glu-414 provides a ligand contact to Mg(2+). Residue Phe-438 participates in L-phenylalanine binding.

The protein belongs to the class-II aminoacyl-tRNA synthetase family. Phe-tRNA synthetase alpha subunit type 2 subfamily. In terms of assembly, tetramer of two alpha and two beta subunits. Requires Mg(2+) as cofactor.

The protein localises to the cytoplasm. The enzyme catalyses tRNA(Phe) + L-phenylalanine + ATP = L-phenylalanyl-tRNA(Phe) + AMP + diphosphate + H(+). This chain is Phenylalanine--tRNA ligase alpha subunit, found in Drosophila melanogaster (Fruit fly).